The primary structure comprises 75 residues: Protein BsdD (75 aa).

Functionally, involved in the non-oxidative decarboxylation and detoxification of phenolic derivatives under both aerobic and anaerobic conditions, however the precise biochemical function of BsdD in metabolism of phenolic acid is unknown. The protein is Protein BsdD of Bacillus subtilis (strain 168).